Here is a 158-residue protein sequence, read N- to C-terminus: Protein Smg homolog (158 aa).

This sequence belongs to the Smg family.

The polypeptide is Protein Smg homolog (Coxiella burnetii (strain Dugway 5J108-111)).